A 215-amino-acid polypeptide reads, in one-letter code: Kunitz trypsin inhibitor 2 (215 aa).

Positions 1-23 (MKNPSVISFLIILLFAATICTHG) are cleaved as a signal peptide. Residues Cys67 and Cys114 are joined by a disulfide bond. A glycan (N-linked (GlcNAc...) asparagine) is linked at Asn145.

The protein belongs to the protease inhibitor I3 (leguminous Kunitz-type inhibitor) family. In terms of assembly, interacts with RD21A. Interacts with RD21B and RD21C. In terms of tissue distribution, expressed in vascular bundles of the carpels, the transmitting tract of the style and septum epidermis. Expressed in etiolated seedlings.

It localises to the secreted. The protein resides in the cell wall. The protein localises to the extracellular space. Its subcellular location is the apoplast. It is found in the endoplasmic reticulum. In terms of biological role, water-soluble and chlorophyll-binding protein that probably does not function as a chloroplast chlorophyll carrier and is not involved in photosynthesis. Involved in the control of cell death in the transmitting tract and septum epidermis during flower development. Binds and inhibits the activity of the cysteine protease RD21A as a pro-death protein. May play a role in herbivore resistance activation during seedling greening. The protein is Kunitz trypsin inhibitor 2 of Arabidopsis thaliana (Mouse-ear cress).